The chain runs to 193 residues: Ribosomal RNA small subunit methyltransferase G (193 aa).

S-adenosyl-L-methionine-binding positions include glycine 61, leucine 66, 112 to 113, and arginine 126; that span reads IE.

The protein belongs to the methyltransferase superfamily. RNA methyltransferase RsmG family.

The protein localises to the cytoplasm. The enzyme catalyses guanosine(527) in 16S rRNA + S-adenosyl-L-methionine = N(7)-methylguanosine(527) in 16S rRNA + S-adenosyl-L-homocysteine. Its function is as follows. Specifically methylates the N7 position of guanine in position 527 of 16S rRNA. The polypeptide is Ribosomal RNA small subunit methyltransferase G (Paracoccus denitrificans (strain Pd 1222)).